A 91-amino-acid chain; its full sequence is Small ribosomal subunit protein uS19 (91 aa).

It belongs to the universal ribosomal protein uS19 family.

Functionally, protein S19 forms a complex with S13 that binds strongly to the 16S ribosomal RNA. In Lactiplantibacillus plantarum (strain ATCC BAA-793 / NCIMB 8826 / WCFS1) (Lactobacillus plantarum), this protein is Small ribosomal subunit protein uS19.